The sequence spans 143 residues: MSGDRDDPRYPYPKDDAELRRRLTPMQYEVTQHAATEPPFTGEYTDTEDAGIYHCVVCGTALFESGAKYHSGCGWPSYFKPIDGEVIDEKMDYTHGMTRVEVRCNQCGAHLGHVFEDGPRDKTGLRYCINSAALNFEAKPERK.

Positions 16–139 (DAELRRRLTP…NSAALNFEAK (124 aa)) constitute a MsrB domain. 4 residues coordinate Zn(2+): C55, C58, C104, and C107. Catalysis depends on C128, which acts as the Nucleophile.

Belongs to the MsrB Met sulfoxide reductase family. Zn(2+) serves as cofactor.

It carries out the reaction L-methionyl-[protein] + [thioredoxin]-disulfide + H2O = L-methionyl-(R)-S-oxide-[protein] + [thioredoxin]-dithiol. This is Peptide methionine sulfoxide reductase MsrB from Burkholderia pseudomallei (strain 1710b).